The following is a 152-amino-acid chain: Putative multi-protein-binding factor 1 (152 aa).

Residues 1–24 are disordered; the sequence is MSDDWESKTVIGSRARVGGGGPRA. Residues 86–140 enclose the HTH cro/C1-type domain; that stretch reads IIKGRSEKGLTQKELAVKINEKPQVVNDYESGRAQPNQQVLSKMERVLGIKLRGK. The H-T-H motif DNA-binding region spans 97 to 116; sequence QKELAVKINEKPQVVNDYES.

Belongs to the MBF1 family.

Its function is as follows. Transcriptional coactivator that stimulates GCN4-dependent transcriptional activity by bridging the DNA-binding region of GCN4 and TBP (SPT15), thereby recruiting TBP to GCN4-bound promoters. Involved in induction of the ribosome quality control (RQC) pathway; a pathway that degrades nascent peptide chains during problematic translation. Required to prevent stalled ribosomes from frameshifting. In Yarrowia lipolytica (strain CLIB 122 / E 150) (Yeast), this protein is Putative multi-protein-binding factor 1 (MBF1).